A 421-amino-acid polypeptide reads, in one-letter code: UDP-N-acetylglucosamine 1-carboxyvinyltransferase 2 (421 aa).

Residue 22–23 participates in phosphoenolpyruvate binding; sequence KN. Residue arginine 94 coordinates UDP-N-acetyl-alpha-D-glucosamine. Cysteine 118 serves as the catalytic Proton donor. Cysteine 118 is subject to 2-(S-cysteinyl)pyruvic acid O-phosphothioketal. UDP-N-acetyl-alpha-D-glucosamine-binding residues include aspartate 308 and isoleucine 330.

This sequence belongs to the EPSP synthase family. MurA subfamily.

The protein resides in the cytoplasm. It catalyses the reaction phosphoenolpyruvate + UDP-N-acetyl-alpha-D-glucosamine = UDP-N-acetyl-3-O-(1-carboxyvinyl)-alpha-D-glucosamine + phosphate. It participates in cell wall biogenesis; peptidoglycan biosynthesis. Its function is as follows. Cell wall formation. Adds enolpyruvyl to UDP-N-acetylglucosamine. This Lactococcus lactis subsp. lactis (strain IL1403) (Streptococcus lactis) protein is UDP-N-acetylglucosamine 1-carboxyvinyltransferase 2.